The sequence spans 119 residues: Large ribosomal subunit protein bL20 (119 aa).

The protein belongs to the bacterial ribosomal protein bL20 family.

Its function is as follows. Binds directly to 23S ribosomal RNA and is necessary for the in vitro assembly process of the 50S ribosomal subunit. It is not involved in the protein synthesizing functions of that subunit. This is Large ribosomal subunit protein bL20 from Alkaliphilus oremlandii (strain OhILAs) (Clostridium oremlandii (strain OhILAs)).